The following is a 182-amino-acid chain: Adenine phosphoribosyltransferase (182 aa).

It belongs to the purine/pyrimidine phosphoribosyltransferase family. In terms of assembly, homodimer.

It localises to the cytoplasm. It catalyses the reaction AMP + diphosphate = 5-phospho-alpha-D-ribose 1-diphosphate + adenine. Its pathway is purine metabolism; AMP biosynthesis via salvage pathway; AMP from adenine: step 1/1. Catalyzes a salvage reaction resulting in the formation of AMP, that is energically less costly than de novo synthesis. This Wolinella succinogenes (strain ATCC 29543 / DSM 1740 / CCUG 13145 / JCM 31913 / LMG 7466 / NCTC 11488 / FDC 602W) (Vibrio succinogenes) protein is Adenine phosphoribosyltransferase.